The sequence spans 101 residues: MKPNFSKGLIPAIVIEEGTKDVLMLAYMNEEAYEKTLETKRTWFYSRSRQSLWNKGETSGNVQYVQSLYLDCDQDSIVVNVKQVGPACHTGEKTCFHYQII.

Mg(2+) is bound at residue Asp71. Cys72 serves as a coordination point for Zn(2+). Asp73 and Asp75 together coordinate Mg(2+). 2 residues coordinate Zn(2+): Cys88 and Cys95.

This sequence belongs to the PRA-CH family. In terms of assembly, homodimer. Requires Mg(2+) as cofactor. Zn(2+) is required as a cofactor.

Its subcellular location is the cytoplasm. It catalyses the reaction 1-(5-phospho-beta-D-ribosyl)-5'-AMP + H2O = 1-(5-phospho-beta-D-ribosyl)-5-[(5-phospho-beta-D-ribosylamino)methylideneamino]imidazole-4-carboxamide. Its pathway is amino-acid biosynthesis; L-histidine biosynthesis; L-histidine from 5-phospho-alpha-D-ribose 1-diphosphate: step 3/9. Catalyzes the hydrolysis of the adenine ring of phosphoribosyl-AMP. This chain is Phosphoribosyl-AMP cyclohydrolase, found in Bacillus cereus (strain B4264).